The following is a 697-amino-acid chain: tRNA 5-methylaminomethyl-2-thiouridine biosynthesis bifunctional protein MnmC (697 aa).

Positions 1 to 275 (MTAKPHKSCQ…KPATLAAIDH (275 aa)) are tRNA (mnm(5)s(2)U34)-methyltransferase. Residues 280-697 (VGGGLASANL…LRKLLKGKAL (418 aa)) are FAD-dependent cmnm(5)s(2)U34 oxidoreductase.

In the N-terminal section; belongs to the methyltransferase superfamily. tRNA (mnm(5)s(2)U34)-methyltransferase family. The protein in the C-terminal section; belongs to the DAO family. The cofactor is FAD.

Its subcellular location is the cytoplasm. The enzyme catalyses 5-aminomethyl-2-thiouridine(34) in tRNA + S-adenosyl-L-methionine = 5-methylaminomethyl-2-thiouridine(34) in tRNA + S-adenosyl-L-homocysteine + H(+). Catalyzes the last two steps in the biosynthesis of 5-methylaminomethyl-2-thiouridine (mnm(5)s(2)U) at the wobble position (U34) in tRNA. Catalyzes the FAD-dependent demodification of cmnm(5)s(2)U34 to nm(5)s(2)U34, followed by the transfer of a methyl group from S-adenosyl-L-methionine to nm(5)s(2)U34, to form mnm(5)s(2)U34. This chain is tRNA 5-methylaminomethyl-2-thiouridine biosynthesis bifunctional protein MnmC, found in Shewanella sp. (strain ANA-3).